The primary structure comprises 170 residues: IMPACT family member YDL177C (170 aa).

The disordered stretch occupies residues 79–98 (KKKGNKANKSNNSHVNKSRN).

It belongs to the IMPACT family.

The protein is IMPACT family member YDL177C of Saccharomyces cerevisiae (strain ATCC 204508 / S288c) (Baker's yeast).